Here is a 481-residue protein sequence, read N- to C-terminus: Glutamate--tRNA ligase (481 aa).

Positions 10 to 20 match the 'HIGH' region motif; sequence PSPTGHLHIGN. A 'KMSKS' region motif is present at residues 251 to 255; the sequence is KLSKR. An ATP-binding site is contributed by Lys-254.

This sequence belongs to the class-I aminoacyl-tRNA synthetase family. Glutamate--tRNA ligase type 1 subfamily. Monomer.

It localises to the cytoplasm. The enzyme catalyses tRNA(Glu) + L-glutamate + ATP = L-glutamyl-tRNA(Glu) + AMP + diphosphate. Catalyzes the attachment of glutamate to tRNA(Glu) in a two-step reaction: glutamate is first activated by ATP to form Glu-AMP and then transferred to the acceptor end of tRNA(Glu). The sequence is that of Glutamate--tRNA ligase from Exiguobacterium sibiricum (strain DSM 17290 / CCUG 55495 / CIP 109462 / JCM 13490 / 255-15).